Here is a 144-residue protein sequence, read N- to C-terminus: Gastric inhibitory polypeptide (144 aa).

Positions 1–21 are cleaved as a signal peptide; the sequence is MVALKTCSLLLVLLFLAVGLG. Propeptides lie at residues 22-42 and 87-144; these read EKEE…PRGP and EARA…LRSQ. The interval 94 to 113 is disordered; that stretch reads AGQSQGKEDKEAQESSLPKS.

It belongs to the glucagon family.

It is found in the secreted. Potent stimulator of insulin secretion and relatively poor inhibitor of gastric acid secretion. The chain is Gastric inhibitory polypeptide (Gip) from Mus musculus (Mouse).